Here is a 565-residue protein sequence, read N- to C-terminus: Phosphatidylinositol 4-kinase gamma 4 (565 aa).

Ubiquitin-like domains are found at residues 32-104 and 109-187; these read IVIF…LVVR and RAIS…RPAK. Residues 257 to 542 form the PI3K/PI4K catalytic domain; sequence GYLPVMSTEG…AILPGTSEET (286 aa). Residues 263–269 are G-loop; the sequence is STEGSGG. ATP contacts are provided by residues 264-270 and Lys-286; that span reads TEGSGGV. The interval 291–311 is disordered; it reads EPMAKNNPRGLPLSTDGEGLK. 369–372 contributes to the ATP binding site; sequence QLFV. Residues 402–410 form a catalytic loop region; the sequence is ANADRHAGN. The interval 425–451 is activation loop; it reads PIDHGYCLPEKFEDCTFEWLYWPQARE. Asp-427 is an ATP binding site.

It belongs to the PI3/PI4-kinase family. Type II PI4K subfamily. Interacts with FTIP1 and RPN10. Specifically expressed in the phloem including companion cells.

The protein resides in the nucleus. It is found in the endoplasmic reticulum. The catalysed reaction is a 1,2-diacyl-sn-glycero-3-phospho-(1D-myo-inositol) + ATP = a 1,2-diacyl-sn-glycero-3-phospho-(1D-myo-inositol 4-phosphate) + ADP + H(+). The phosphorylation of phosphatidylinositol (PI) to PI4P is the first committed step in the generation of phosphatidylinositol 4,5-bisphosphate (PIP2), a precursor of the second messenger inositol 1,4,5-trisphosphate (InsP3). Involved in the control of flowering under long day conditions by promoting degradation of FTIP1. Recruits FTIP1 for degradation by the 26S proteasome in leaves, which affects RFT1 transport to the shoot apical meristem (SAM). The sequence is that of Phosphatidylinositol 4-kinase gamma 4 from Oryza sativa subsp. japonica (Rice).